A 403-amino-acid polypeptide reads, in one-letter code: Queuine tRNA-ribosyltransferase catalytic subunit 1 (403 aa).

Ala-2 is modified (N-acetylalanine). The Proton acceptor role is filled by Asp-105. 105–109 (DSGGF) lines the queuine pocket. Residue Ser-139 is modified to Phosphoserine. Queuine-binding residues include Asp-159, Gln-202, and Gly-229. The segment at 260–266 (GVGYATD) is RNA binding. Catalysis depends on Asp-279, which acts as the Nucleophile. The tract at residues 284–288 (TRTAR) is RNA binding; important for wobble base 34 recognition. Residues Cys-317, Cys-319, Cys-322, and His-348 each coordinate Zn(2+).

It belongs to the queuine tRNA-ribosyltransferase family. Heterodimer of a catalytic subunit QTRT1 and an accessory subunit QTRT2. It depends on Zn(2+) as a cofactor.

It localises to the cytoplasm. The protein resides in the mitochondrion outer membrane. The catalysed reaction is guanosine(34) in tRNA + queuine = queuosine(34) in tRNA + guanine. Functionally, catalytic subunit of the queuine tRNA-ribosyltransferase (TGT) that catalyzes the base-exchange of a guanine (G) residue with queuine (Q) at position 34 (anticodon wobble position) in tRNAs with GU(N) anticodons (tRNA-Asp, -Asn, -His and -Tyr), resulting in the hypermodified nucleoside queuosine (7-(((4,5-cis-dihydroxy-2-cyclopenten-1-yl)amino)methyl)-7-deazaguanosine). Catalysis occurs through a double-displacement mechanism. The nucleophile active site attacks the C1' of nucleotide 34 to detach the guanine base from the RNA, forming a covalent enzyme-RNA intermediate. The proton acceptor active site deprotonates the incoming queuine, allowing a nucleophilic attack on the C1' of the ribose to form the product. This is Queuine tRNA-ribosyltransferase catalytic subunit 1 from Rattus norvegicus (Rat).